A 905-amino-acid chain; its full sequence is Transcriptional regulator MNL1 (905 aa).

A compositionally biased stretch (polar residues) spans 1–29 (MDSHNNIDQSVSELLSDPASVQQSYNSQL). Disordered regions lie at residues 1–34 (MDSH…GPEF), 312–340 (QTQA…ASHT), 383–419 (MDQV…NARY), 434–460 (SEKN…NLLS), 525–544 (TKEE…KPKR), 584–613 (NISS…SESS), 625–671 (NVGK…GTVE), and 685–733 (PASE…TSST). The segment covering 312 to 334 (QTQAQAQAHQQQQQQSQQQHSPQ) has biased composition (low complexity). The span at 439–460 (NHNNRSPPTPPTSTSSPQNLLS) shows a compositional bias: low complexity. Polar residues predominate over residues 584-598 (NISSHHSSGTPSITT). Positions 628-639 (KRKNKSYRKPKG) are enriched in basic residues. 2 stretches are compositionally biased toward low complexity: residues 647-669 (QQQQ…STGT) and 690-710 (SSLL…EASS). 2 consecutive C2H2-type zinc fingers follow at residues 832–855 (YLCN…RSLH) and 861–883 (YNCD…LKIH). The segment at 885 to 905 (QEDEKDCADAETGVGMDDASG) is disordered.

The protein resides in the nucleus. In terms of biological role, transcription factor that activates stress response genes via SLE (STRE-like) elements. Required for adaptation to weak acid stress such as acetic acid stress, but seems not involved in the response to heat, osmotic, ethanol, nutrient, oxidative, or heavy-metal stress. Activates a subset of the genes that are repressed by NRG1. The chain is Transcriptional regulator MNL1 (MNL1) from Candida albicans (strain SC5314 / ATCC MYA-2876) (Yeast).